The chain runs to 223 residues: Golgi SNAP receptor complex member 1 (223 aa).

Serine 2 carries the N-acetylserine modification. Over 2–204 (SSQPSFVTIR…MKINTRRKKN (203 aa)) the chain is Cytoplasmic. Phosphoserine is present on serine 164. Residues 205 to 222 (AFVLATITTLCILFLFFT) form a helical; Anchor for type IV membrane protein membrane-spanning segment. A topological domain (vesicular) is located at residue tryptophan 223.

It belongs to the GOSR1 family. In terms of assembly, component of several multiprotein Golgi SNARE complexes. Identified in a Golgi SNARE complex consisting of t-SNARES SED5, YKT6, and the v-SNARE SFT1. Interacts with BET1. Interacts with BOS1. Interacts with SEC22. Interacts with PEP12. Interacts with self.

It is found in the golgi apparatus membrane. Its function is as follows. Involved in transport from the ER to the Golgi apparatus as well as in intra-Golgi transport. It belongs to a super-family of proteins called t-SNAREs or soluble NSF (N-ethylmaleimide-sensitive factor) attachment protein receptor. Rescues alpha-factor maturation defects. In Saccharomyces cerevisiae (strain ATCC 204508 / S288c) (Baker's yeast), this protein is Golgi SNAP receptor complex member 1 (GOS1).